The following is a 570-amino-acid chain: MEKKWTYCAVYSIIQMHLVRGIVEETFGAEEHIYALPGSDVNLTCQTQKKGILVQMQWSKVTDKVDLLAVYHPQHGFYCDSKSACRSLVAFREPPGNVFEWTLYLRNVSSSTTGKYECSFTLYPEGIQTKIYSLKIQTNVAQEEWKNNHTIEIEINGTLEIPCFQNTSLEISSVLTFAWLVEDNGTQKTLTAGGHPISNSALFKDRVRIGTDYRLYLSPVQIHDDGWKFSCHVVVRPGRVLRSSTTVKVFAKPEIPMIVENNSMDVIGERIFTCSLRNVFPTANLTWFIQRSFPQGEREEMYTTSEKRKNKDGFWELKSVLTSAYDNKPAHSNNLTIWCMALSPAPGHKVWNSSSEKITFFLGSLNPPIDSPLNATESTLGTRPSLANSISPTGYRTPSSTAHVDVSTSTSNVILPSVQTSNSDVPTRGFNYSWTSSGKDAKHSAPWMPSETNSSPSSGAGSTLPGDIFTSTTRASSEVPTTANVSTKNNHITGTVISKPKDGMSWPVIVAALLLSCFVLFGLGVRKWCQYQKEIMQRPPPFKPPPPPIKYTCIQESIGSDLPCHELETL.

A signal peptide spans 1–21 (MEKKWTYCAVYSIIQMHLVRG). At 22 to 504 (IVEETFGAEE…TVISKPKDGM (483 aa)) the chain is on the extracellular side. The Ig-like V-type 1 domain occupies 38 to 125 (GSDVNLTCQT…YECSFTLYPE (88 aa)). N-linked (GlcNAc...) asparagine glycosylation is found at Asn42, Asn107, Asn148, Asn156, Asn166, Asn184, Asn261, Asn284, Asn334, Asn352, Asn374, and Asn431. Cys45 and Cys118 are oxidised to a cystine. The region spanning 156–222 (NGTLEIPCFQ…YRLYLSPVQI (67 aa)) is the Ig-like V-type 2 domain. Cys163 and Cys231 are oxidised to a cystine. The Ig-like C2-type domain maps to 253-359 (PEIPMIVENN…VWNSSSEKIT (107 aa)). Cys274 and Cys339 are joined by a disulfide. Positions 373–403 (LNATESTLGTRPSLANSISPTGYRTPSSTAH) are disordered. Positions 441-486 (AKHSAPWMPSETNSSPSSGAGSTLPGDIFTSTTRASSEVPTTANVS) are disordered. Composition is skewed to polar residues over residues 450–461 (SETNSSPSSGAG) and 469–486 (FTST…ANVS). N-linked (GlcNAc...) asparagine glycosylation is present at Asn484. A helical transmembrane segment spans residues 505 to 525 (SWPVIVAALLLSCFVLFGLGV). The Cytoplasmic segment spans residues 526-570 (RKWCQYQKEIMQRPPPFKPPPPPIKYTCIQESIGSDLPCHELETL).

As to quaternary structure, homodimer; disulfide-linked. Interacts with PVR.

Its subcellular location is the membrane. Its function is as follows. May be involved in adhesive interactions of activated T and NK cells during the late phase of the immune response. Promotes NK cell-target adhesion by interacting with PVR present on target cells. May function at a time after T and NK cells have penetrated the endothelium using integrins and selectins, when they are actively engaging diseased cells and moving within areas of inflammation. This is T-cell surface protein tactile (CD96) from Bos taurus (Bovine).